The following is a 314-amino-acid chain: Melanoma-associated antigen 12 (314 aa).

Positions Met1 to Glu14 are enriched in basic and acidic residues. The segment at Met1 to Pro72 is disordered. The segment covering Glu17–Thr44 has biased composition (low complexity). Residues Leu109 to Ala308 form the MAGE domain.

In terms of tissue distribution, expressed in many tumors of several types, such as melanoma, head and neck squamous cell carcinoma, lung carcinoma and breast carcinoma, but not in normal tissues except for testes.

Its function is as follows. Not known, though may play a role tumor transformation or progression. In vitro promotes cell viability in melanoma cell lines. This is Melanoma-associated antigen 12 (MAGEA12) from Homo sapiens (Human).